Consider the following 284-residue polypeptide: Digeranylgeranylglyceryl phosphate synthase (284 aa).

Transmembrane regions (helical) follow at residues isoleucine 10 to tryptophan 30, leucine 37 to valine 57, alanine 76 to alanine 98, tyrosine 102 to alanine 119, glycine 126 to leucine 146, leucine 217 to isoleucine 237, and glycine 260 to phenylalanine 280.

Belongs to the UbiA prenyltransferase family. DGGGP synthase subfamily. Requires Mg(2+) as cofactor.

The protein resides in the cell membrane. The enzyme catalyses sn-3-O-(geranylgeranyl)glycerol 1-phosphate + (2E,6E,10E)-geranylgeranyl diphosphate = 2,3-bis-O-(geranylgeranyl)-sn-glycerol 1-phosphate + diphosphate. Its pathway is membrane lipid metabolism; glycerophospholipid metabolism. Functionally, prenyltransferase that catalyzes the transfer of the geranylgeranyl moiety of geranylgeranyl diphosphate (GGPP) to the C2 hydroxyl of (S)-3-O-geranylgeranylglyceryl phosphate (GGGP). This reaction is the second ether-bond-formation step in the biosynthesis of archaeal membrane lipids. The sequence is that of Digeranylgeranylglyceryl phosphate synthase from Metallosphaera sedula (strain ATCC 51363 / DSM 5348 / JCM 9185 / NBRC 15509 / TH2).